Reading from the N-terminus, the 360-residue chain is Protein YIM1-1 (360 aa).

The protein belongs to the YIM1 family.

Its subcellular location is the lipid droplet. It localises to the mitochondrion. The protein is Protein YIM1-1 (YIM1-1) of Lachancea thermotolerans (strain ATCC 56472 / CBS 6340 / NRRL Y-8284) (Yeast).